We begin with the raw amino-acid sequence, 446 residues long: Maturase K (446 aa).

The protein belongs to the intron maturase 2 family. MatK subfamily.

The protein localises to the plastid. The protein resides in the chloroplast. In terms of biological role, usually encoded in the trnK tRNA gene intron. Probably assists in splicing its own and other chloroplast group II introns. This chain is Maturase K, found in Phalaenopsis aphrodite subsp. formosana (Moth orchid).